The following is a 23-amino-acid chain: Unknown protein NF005 from 2D-PAGE (23 aa).

A disordered region spans residues 1–23; sequence AGKARKQLSKNEDTKLKEQYIXD. Basic and acidic residues predominate over residues 9–23; sequence SKNEDTKLKEQYIXD.

In Naegleria fowleri (Brain eating amoeba), this protein is Unknown protein NF005 from 2D-PAGE.